Consider the following 200-residue polypeptide: Small ribosomal subunit protein uS4 (200 aa).

The disordered stretch occupies residues 22–43 (TGKELERRPYAPGQHGPTQRKK). The S4 RNA-binding domain maps to 92–170 (QRLDNIVYRL…VPEYVTFDAE (79 aa)).

Belongs to the universal ribosomal protein uS4 family. In terms of assembly, part of the 30S ribosomal subunit. Contacts protein S5. The interaction surface between S4 and S5 is involved in control of translational fidelity.

Its function is as follows. One of the primary rRNA binding proteins, it binds directly to 16S rRNA where it nucleates assembly of the body of the 30S subunit. Functionally, with S5 and S12 plays an important role in translational accuracy. The chain is Small ribosomal subunit protein uS4 from Listeria monocytogenes serotype 4b (strain F2365).